We begin with the raw amino-acid sequence, 217 residues long: MVVIGEKFPEVEVITTHGKLKLPEHYIEAGKWFVLFSHPGDFTPVCTTEFVAFQKRYDQFRSLNTELIGLSIDQVFSHIKWVEWIKEKLDVDIEFPIIADDRGELAVKLGMISPYKGNNTVRAVFVVDATGTIRAIIYYPQEVGRNMDEVVRLVKALQTADKGYATPANWPENDFLNEKVIVPPANNMDARKNRLEACKSGELEGYDWWFCYTDLKE.

Residues Val-2–Thr-159 form the Thioredoxin domain. The active-site Cysteine sulfenic acid (-SOH) intermediate is Cys-46. Position 122 (Arg-122) interacts with substrate.

This sequence belongs to the peroxiredoxin family. Prx6 subfamily. As to quaternary structure, homodecamer. Pentamer of dimers that assemble into a ring structure.

The protein localises to the cytoplasm. It catalyses the reaction a hydroperoxide + [thioredoxin]-dithiol = an alcohol + [thioredoxin]-disulfide + H2O. Thiol-specific peroxidase that catalyzes the reduction of hydrogen peroxide and organic hydroperoxides to water and alcohols, respectively. Plays a role in cell protection against oxidative stress by detoxifying peroxides. This is Peroxiredoxin from Methanococcus maripaludis (strain C5 / ATCC BAA-1333).